Reading from the N-terminus, the 259-residue chain is Glutamate racemase (259 aa).

Residues 7–8 and 39–40 contribute to the substrate site; these read DS and YG. C70 functions as the Proton donor/acceptor in the catalytic mechanism. 71-72 lines the substrate pocket; sequence NS. The Proton donor/acceptor role is filled by C180. 181–182 is a substrate binding site; sequence TH.

This sequence belongs to the aspartate/glutamate racemases family.

It catalyses the reaction L-glutamate = D-glutamate. It participates in cell wall biogenesis; peptidoglycan biosynthesis. In terms of biological role, provides the (R)-glutamate required for cell wall biosynthesis. The polypeptide is Glutamate racemase (Hydrogenobaculum sp. (strain Y04AAS1)).